The following is a 340-amino-acid chain: Methionine import ATP-binding protein MetN 1 (340 aa).

The ABC transporter domain maps to 2–242 (IRLENVSVDF…PQHAYTKQLV (241 aa)). Residue 39-46 (GTSGAGKS) participates in ATP binding.

This sequence belongs to the ABC transporter superfamily. Methionine importer (TC 3.A.1.24) family. In terms of assembly, the complex is composed of two ATP-binding proteins (MetN), two transmembrane proteins (MetI) and a solute-binding protein (MetQ).

It is found in the cell inner membrane. The enzyme catalyses L-methionine(out) + ATP + H2O = L-methionine(in) + ADP + phosphate + H(+). The catalysed reaction is D-methionine(out) + ATP + H2O = D-methionine(in) + ADP + phosphate + H(+). Part of the ABC transporter complex MetNIQ involved in methionine import. Responsible for energy coupling to the transport system. In Pectobacterium atrosepticum (strain SCRI 1043 / ATCC BAA-672) (Erwinia carotovora subsp. atroseptica), this protein is Methionine import ATP-binding protein MetN 1.